Reading from the N-terminus, the 290-residue chain is 4-diphosphocytidyl-2-C-methyl-D-erythritol kinase (290 aa).

Lys-13 is an active-site residue. 96–106 provides a ligand contact to ATP; the sequence is PMGGGIGGGSS. The active site involves Asp-138.

This sequence belongs to the GHMP kinase family. IspE subfamily.

The enzyme catalyses 4-CDP-2-C-methyl-D-erythritol + ATP = 4-CDP-2-C-methyl-D-erythritol 2-phosphate + ADP + H(+). It functions in the pathway isoprenoid biosynthesis; isopentenyl diphosphate biosynthesis via DXP pathway; isopentenyl diphosphate from 1-deoxy-D-xylulose 5-phosphate: step 3/6. In terms of biological role, catalyzes the phosphorylation of the position 2 hydroxy group of 4-diphosphocytidyl-2C-methyl-D-erythritol. This is 4-diphosphocytidyl-2-C-methyl-D-erythritol kinase from Vibrio campbellii (strain ATCC BAA-1116).